Consider the following 217-residue polypeptide: Thiosulfate dehydrogenase electron acceptor (217 aa).

A signal peptide spans 1–28 (MRQFIPMRRVLAVATLGALFWAAPASWA). Cytochrome c domains lie at 29–104 (AAPP…SKLK) and 116–206 (AAAA…AAQP). Heme c-binding residues include cysteine 37, cysteine 40, histidine 41, cysteine 137, cysteine 140, and histidine 141.

In terms of processing, binds 2 heme c groups covalently per subunit.

In terms of biological role, acts as an electron acceptor for the thiosulfate dehydrogenase TsdA. In Thiomonas intermedia (strain K12) (Thiobacillus intermedius), this protein is Thiosulfate dehydrogenase electron acceptor (tsdB).